A 236-amino-acid chain; its full sequence is ATP synthase subunit a (236 aa).

5 helical membrane-spanning segments follow: residues 17–37 (LSDMLMITITCLIVFIIAVAA), 75–95 (FLTLGVTLIMYVFVANMLGLP), 112–132 (DATVTLTLAVMVVALTHYYGV), 174–194 (IYAGEILLGLLASLGTHYGVL), and 208–228 (FSIFVGTIQAFIFTMLTMVYM).

This sequence belongs to the ATPase A chain family. F-type ATPases have 2 components, CF(1) - the catalytic core - and CF(0) - the membrane proton channel. CF(1) has five subunits: alpha(3), beta(3), gamma(1), delta(1), epsilon(1). CF(0) has three main subunits: a(1), b(2) and c(9-12). The alpha and beta chains form an alternating ring which encloses part of the gamma chain. CF(1) is attached to CF(0) by a central stalk formed by the gamma and epsilon chains, while a peripheral stalk is formed by the delta and b chains.

It localises to the cell membrane. Key component of the proton channel; it plays a direct role in the translocation of protons across the membrane. The protein is ATP synthase subunit a of Geobacillus stearothermophilus (Bacillus stearothermophilus).